The primary structure comprises 199 residues: MARCKS-related protein (199 aa).

Positions 1 to 199 (MGSQSSKAPR…GPASASAENE (199 aa)) are disordered. Gly2 is lipidated: N-myristoyl glycine. Thr14 carries the post-translational modification Phosphothreonine. Positions 16–26 (EEAAGASPAKA) are enriched in low complexity. Residues Ser22, Ser36, and Ser48 each carry the phosphoserine modification. Residues 53–64 (GADEAAGATGDA) are compositionally biased toward low complexity. Residue Ser71 is modified to Phosphoserine. Basic and acidic residues predominate over residues 74-85 (AEAKGEVAPKET). Thr85 carries the phosphothreonine modification. A compositionally biased stretch (basic residues) spans 86 to 98 (PKKKKKFSFKKPF). The effector domain involved in lipid-binding and calmodulin-binding stretch occupies residues 87-110 (KKKKKFSFKKPFKLSGLSFKRNRK). A phosphoserine; by PKC mark is found at Ser93, Ser101, and Ser104. Ser119 bears the Phosphoserine mark. A Phosphoserine; by MAPK8 modification is found at Ser120. 2 positions are modified to phosphoserine: Ser132 and Ser135. Residue Thr148 is modified to Phosphothreonine; by MAPK8. Residues Ser151, Ser162, and Ser165 each carry the phosphoserine modification. A compositionally biased stretch (low complexity) spans 175–199 (GPQAAEPSTPSGPESGPASASAENE). At Thr183 the chain carries Phosphothreonine; by MAPK8.

It belongs to the MARCKS family. In terms of assembly, binds to filamentous actin (F-actin), but not to monomeric G-actin, independently of its phosphorylation status. Interacts with calmodulin. Post-translationally, phosphorylated. Phosphorylation at Ser-120 and Thr-183 is non-redundantly catalyzed by MAPK8 in vivo. Phosphorylation at Thr-148 is preferentially catalyzed by MAPK8 in vivo, but this modification can also be catalyzed by other kinases in the absence of MAPK8. May be phosphorylated by protein kinase C, which disrupts the interaction with calmodulin.

The protein resides in the cytoplasm. It localises to the cytoskeleton. It is found in the cell membrane. Controls cell movement by regulating actin cytoskeleton homeostasis and filopodium and lamellipodium formation. When unphosphorylated, induces cell migration. When phosphorylated by MAPK8, induces actin bundles formation and stabilization, thereby reducing actin plasticity, hence restricting cell movement, including neuronal migration. May be involved in coupling the protein kinase C and calmodulin signal transduction systems. The protein is MARCKS-related protein (Marcksl1) of Rattus norvegicus (Rat).